Reading from the N-terminus, the 23-residue chain is Protein YsaE (23 aa).

This is Protein YsaE from Escherichia coli (strain K12).